A 360-amino-acid polypeptide reads, in one-letter code: GTPase Obg (360 aa).

An Obg domain is found at 1–156; the sequence is MFVDSVEIII…KCVRLELKLI (156 aa). One can recognise an OBG-type G domain in the interval 157-360; the sequence is ADIGLVGFPN…LKFVLLKALQ (204 aa). GTP contacts are provided by residues 163–170, 188–192, 210–213, 279–282, and 341–343; these read GFPNAGKS, FTTLV, DIPG, NKCD, and SAV. Positions 170 and 190 each coordinate Mg(2+).

It belongs to the TRAFAC class OBG-HflX-like GTPase superfamily. OBG GTPase family. In terms of assembly, monomer. Requires Mg(2+) as cofactor.

Its subcellular location is the cytoplasm. Its function is as follows. An essential GTPase which binds GTP, GDP and possibly (p)ppGpp with moderate affinity, with high nucleotide exchange rates and a fairly low GTP hydrolysis rate. Plays a role in control of the cell cycle, stress response, ribosome biogenesis and in those bacteria that undergo differentiation, in morphogenesis control. This is GTPase Obg from Helicobacter pylori (strain J99 / ATCC 700824) (Campylobacter pylori J99).